A 181-amino-acid polypeptide reads, in one-letter code: Trafficking protein particle complex subunit 3 homolog (181 aa).

Cys70 is lipidated: S-palmitoyl cysteine.

This sequence belongs to the TRAPP small subunits family. BET3 subfamily. As to quaternary structure, homodimer. Part of the multisubunit TRAPP (transport protein particle) complex.

The protein resides in the golgi apparatus. It localises to the cis-Golgi network. Its subcellular location is the endoplasmic reticulum. Its function is as follows. May play a role in vesicular transport from endoplasmic reticulum to Golgi. Required for the systemic spread of the RNAi response. The polypeptide is Trafficking protein particle complex subunit 3 homolog (trpp-3) (Caenorhabditis elegans).